The primary structure comprises 1170 residues: Error-prone DNA polymerase (1170 aa).

Disordered stretches follow at residues 867-899 (RGAR…LHND) and 1129-1170 (IPHG…RDFH). Positions 886–899 (PRNDNDRQIPLHND) are enriched in basic and acidic residues.

The protein belongs to the DNA polymerase type-C family. DnaE2 subfamily.

The protein localises to the cytoplasm. It catalyses the reaction DNA(n) + a 2'-deoxyribonucleoside 5'-triphosphate = DNA(n+1) + diphosphate. DNA polymerase involved in damage-induced mutagenesis and translesion synthesis (TLS). It is not the major replicative DNA polymerase. This chain is Error-prone DNA polymerase, found in Bradyrhizobium sp. (strain ORS 278).